Consider the following 165-residue polypeptide: Free methionine-R-sulfoxide reductase (165 aa).

The GAF domain occupies 49–149 (LLEDDTLVLG…LRQLVAQLEK (101 aa)).

Belongs to the free Met sulfoxide reductase family.

The enzyme catalyses [thioredoxin]-disulfide + L-methionine + H2O = L-methionine (R)-S-oxide + [thioredoxin]-dithiol. Functionally, catalyzes the reversible oxidation-reduction of the R-enantiomer of free methionine sulfoxide to methionine. Specific for free L-methionine-(R)-S-oxide. The chain is Free methionine-R-sulfoxide reductase (msrC) from Escherichia coli (strain K12).